A 71-amino-acid polypeptide reads, in one-letter code: uncharacterized protein (71 aa).

Residues 2–24 (IIAIVAVVIFLLNFLTPYGYMPM) traverse the membrane as a helical segment. The disordered stretch occupies residues 48–71 (PAESSSNGGSMITKPSTGACQGGR). Over residues 49–71 (AESSSNGGSMITKPSTGACQGGR) the composition is skewed to polar residues.

Its subcellular location is the membrane. This is an uncharacterized protein from Archaeoglobus fulgidus (strain ATCC 49558 / DSM 4304 / JCM 9628 / NBRC 100126 / VC-16).